We begin with the raw amino-acid sequence, 260 residues long: Circadian clock-controlled protein daywake (260 aa).

The N-terminal stretch at 1–25 is a signal peptide; sequence MQLTSASVCLLWMGLLSWVSHRIDA.

It belongs to the TO family.

Functionally, component of the circadian clock or downstream effector of clock function. Required for suppressing daytime sleep (siesta) under ambient environmental temperatures. Part of a heat avoidance mechanism that modulates daytime sleep behavior under different environmental temperatures to minimize the risk of heat exposure. Under cooler ambient temperatures, suppresses daytime sleep (siesta) and thus allows for longer periods of daytime activity. This Drosophila yakuba (Fruit fly) protein is Circadian clock-controlled protein daywake.